The following is a 65-amino-acid chain: Transcriptional regulatory protein SenS (65 aa).

Residues 11–31 (RFRKRKTYGNQILPLELLIEK) constitute a DNA-binding region (H-T-H motif).

To B.natto SenN.

Regulates the expression of extracellular-protein genes of Bacillus subtilis. This chain is Transcriptional regulatory protein SenS (senS), found in Bacillus subtilis (strain 168).